Here is a 282-residue protein sequence, read N- to C-terminus: Pantothenate synthetase (282 aa).

Met30–His37 lines the ATP pocket. His37 (proton donor) is an active-site residue. Gln61 provides a ligand contact to (R)-pantoate. Gln61 contributes to the beta-alanine binding site. Residue Gly147 to Asp150 coordinates ATP. Residue Gln153 coordinates (R)-pantoate. ATP is bound by residues Val176 and Leu184–Arg187.

It belongs to the pantothenate synthetase family. In terms of assembly, homodimer.

The protein localises to the cytoplasm. The enzyme catalyses (R)-pantoate + beta-alanine + ATP = (R)-pantothenate + AMP + diphosphate + H(+). It participates in cofactor biosynthesis; (R)-pantothenate biosynthesis; (R)-pantothenate from (R)-pantoate and beta-alanine: step 1/1. Catalyzes the condensation of pantoate with beta-alanine in an ATP-dependent reaction via a pantoyl-adenylate intermediate. This chain is Pantothenate synthetase, found in Bacteroides fragilis (strain YCH46).